A 260-amino-acid chain; its full sequence is WUSCHEL-related homeobox 2 (260 aa).

The homeobox; WUS-type DNA-binding region spans 10-74 (ASSSRWNPTK…NHKARQRQKQ (65 aa)).

It belongs to the WUS homeobox family.

It is found in the nucleus. Its function is as follows. Probable transcription factor involved in embryonic patterning. Required for apical embryo development after fertilization. Its specific localization to the apical daughter cell of the zygote, while WOX8 is confined to the basal cell, suggests that the asymmetric division of the plant zygote separates determinants of apical and basal cell fates. The polypeptide is WUSCHEL-related homeobox 2 (WOX2) (Arabidopsis thaliana (Mouse-ear cress)).